The primary structure comprises 236 residues: DNA repair protein RecO (236 aa).

This sequence belongs to the RecO family.

Its function is as follows. Involved in DNA repair and RecF pathway recombination. This chain is DNA repair protein RecO, found in Stutzerimonas stutzeri (strain A1501) (Pseudomonas stutzeri).